A 444-amino-acid chain; its full sequence is Cop9 signalosome complex subunit 11 (444 aa).

Positions 195-367 (FFTMMTSEPL…IHFEDSSILQ (173 aa)) constitute a PCI domain. The disordered stretch occupies residues 419 to 439 (SSDDMDIDEVNDRSDISDSEG).

As to quaternary structure, component of a COP9 signalosome-like (CSN) complex, composed of RRI1/CSN5, CSN9, RRI2/CSN10, PCI8/CSN11, CSN12 and CSI1. Interacts with PRT1 and RPG1, 2 subunits of the core complex of translation initiation factor 3 (eIF3).

Its subcellular location is the cytoplasm. The protein localises to the nucleus. Its function is as follows. Component of the COP9 signalosome (CSN) complex that acts as an regulator of the ubiquitin (Ubl) conjugation pathway by mediating the deneddylation of the cullin subunit of SCF-type E3 ubiquitin-protein ligase complexes The CSN complex is involved in the regulation of the mating pheromone response. PCI8 may also be involved in transcriptional and translational control. This Saccharomyces cerevisiae (strain ATCC 204508 / S288c) (Baker's yeast) protein is Cop9 signalosome complex subunit 11 (PCI8).